A 204-amino-acid chain; its full sequence is Dephospho-CoA kinase (204 aa).

The DPCK domain maps to 13–204 (RIGLTGGIAS…LWKNTIKKLV (192 aa)). ATP is bound at residue 21–26 (ASGKST).

The protein belongs to the CoaE family.

The protein localises to the cytoplasm. It carries out the reaction 3'-dephospho-CoA + ATP = ADP + CoA + H(+). Its pathway is cofactor biosynthesis; coenzyme A biosynthesis; CoA from (R)-pantothenate: step 5/5. Functionally, catalyzes the phosphorylation of the 3'-hydroxyl group of dephosphocoenzyme A to form coenzyme A. The chain is Dephospho-CoA kinase from Prochlorococcus marinus subsp. pastoris (strain CCMP1986 / NIES-2087 / MED4).